We begin with the raw amino-acid sequence, 916 residues long: MAKNVRFSINMFGVMSPMIPPPRHHPVAPMSYPYQKPSSFEYDQLNRVPLSPHHHQQPPYPKPPLQHPSASPIHHQPPPPQHSPSVGDFLPPLQPQPHQDAAGGSRSIYSAHALSQAATNLHPQHLQHLQHGPFSQQPPPPPMGSSPSPALSSSITTGGGGVTRGGGGGGHIIPVDDDSGCALEEYTWVPPGLRPDQVHLYFSAIPEDKVPYVNSIGERHRVRQLLQQLPPHDNEVRYCHSLTDEERKELKLFSAQRKREALGRGTVKQLATNQICDGCGECISSGDMGVYASRFDPGTCWHPACFVCSVCKELLVDLIYFHREARLYCGRHHAETLKPRCSACDEIILADECTEAEGRAWHIKHFACFECDKQLGGQRYIMRDGKPYCLHCFDAMFAEYCDFCSEPIGVDQGQMSHDGQHWHATDSCFACSTCRCSLLGRPFLPRRGEIYCSIACSKGEPPTPSDGSVPTVLPSRTRLRAPGQRNFDDPSAEYVPNLPKSPEPLQSPISERSTPHSSPAKHSHTEMSTNISSPVPTEFNDQTYSVSADNDVQTYTGSGATSPISSRTLPCTEPSDQTDHQHQSLPPLLPNHRRIPQCSPELDRLLHKDRSRQPLDLTDLSLSLDNWQADHNSTVIPGPSIAKTNPALTSSMPELSQSLQQQQQQQQQPQSLLAYDDISPLDKASAITDPDDAIQNASDDASHSIVELPTPPPIVSNTRDPENLPKMPLRRFQNSLPRNKFHKSSIIKKEVRFEGIFQDSLPRSKSYCTRSGGSRSRSSKSKRRSSHHHQHHRSSGESSSYSGTSYDRHHHSSSGSSSSNRRSPRRRRVPDVEFIEHQDHHRGDGDDDSDSRSVCSTCSSSSSSADDTVYELPMRRTYGGTRIHYMPNNSLACARKRKQLQNSHPYEKDNKNCIIS.

2 disordered regions span residues 49-105 (PLSP…AGGS) and 127-176 (QHLQ…IPVD). Over residues 145 to 156 (SSPSPALSSSIT) the composition is skewed to low complexity. Over residues 157–171 (TGGGGVTRGGGGGGH) the composition is skewed to gly residues. Residues 167–275 (GGGGHIIPVD…TVKQLATNQI (109 aa)) form the PET domain. LIM zinc-binding domains are found at residues 274-338 (QICD…ETLK), 339-399 (PRCS…MFAE), and 400-462 (YCDF…GEPP). 4 disordered regions span residues 460–593 (EPPT…PNHR), 635–671 (VIPGPSIAKTNPALTSSMPELSQSLQQQQQQQQQPQS), 692–725 (DAIQNASDDASHSIVELPTPPPIVSNTRDPENLP), and 763–870 (RSKS…DTVY). Polar residues-rich tracts occupy residues 507 to 517 (SPISERSTPHS), 526 to 569 (EMST…SRTL), and 642 to 654 (AKTNPALTSSMPE). The segment covering 655-671 (LSQSLQQQQQQQQQPQS) has biased composition (low complexity). Positions 777–793 (RSSKSKRRSSHHHQHHR) are enriched in basic residues. A compositionally biased stretch (low complexity) spans 796-805 (GESSSYSGTS). The span at 829 to 844 (VPDVEFIEHQDHHRGD) shows a compositional bias: basic and acidic residues. Residues 852–867 (RSVCSTCSSSSSSADD) are compositionally biased toward low complexity.

The protein belongs to the prickle / espinas / testin family. Interacts with dsh; PET and LIM domains interact with dsh DEP domain, in wing cells. Interacts with Vang in photoreceptor cells.

The protein resides in the cell membrane. Its function is as follows. Acts in a planar cell polarity (PCP) complex; polarization along the apical/basal axis of epithelial cells. PCP signaling in the wing disk requires the receptor fz and the cytoplasmic proteins dsh and pk. These act in a feedback loop leading to activation of the jnk cascade and subsequent polarized arrangement of hairs and bristles. Dgo and pk compete with one another for dsh binding, thereby modulating fz dsh activity and ensuring tight control over fz PCP signaling. Vang, stan and pk function together to regulate the establishment of tissue polarity in the adult eye. The polypeptide is Protein prickle (Aedes aegypti (Yellowfever mosquito)).